A 92-amino-acid chain; its full sequence is Putative pterin-4-alpha-carbinolamine dehydratase 2 (92 aa).

This sequence belongs to the pterin-4-alpha-carbinolamine dehydratase family.

It catalyses the reaction (4aS,6R)-4a-hydroxy-L-erythro-5,6,7,8-tetrahydrobiopterin = (6R)-L-erythro-6,7-dihydrobiopterin + H2O. The protein is Putative pterin-4-alpha-carbinolamine dehydratase 2 of Gloeobacter violaceus (strain ATCC 29082 / PCC 7421).